The chain runs to 971 residues: Exportin-2 (971 aa).

M1 is modified (N-acetylmethionine). Residues 29-102 (AEKFLESVEG…KANIVHLMLS (74 aa)) form the Importin N-terminal domain. S112 carries the phosphoserine modification. N6-acetyllysine is present on residues K574 and K824. A Phosphoserine modification is found at S931.

It belongs to the XPO2/CSE1 family. In terms of assembly, found in a complex with CSE1L/XPO2, Ran and KPNA2. Binds with high affinity to importin-alpha only in the presence of RanGTP. The complex is dissociated by the combined action of RanBP1 and RanGAP1. Interacts with CFTR. As to expression, detected in brain, placenta, ovary, testis and trachea (at protein level). Widely expressed. Highly expressed in testis and in proliferating cells.

It localises to the cytoplasm. The protein localises to the nucleus. Functionally, export receptor for importin-alpha. Mediates importin-alpha re-export from the nucleus to the cytoplasm after import substrates (cargos) have been released into the nucleoplasm. In the nucleus binds cooperatively to importin-alpha and to the GTPase Ran in its active GTP-bound form. Docking of this trimeric complex to the nuclear pore complex (NPC) is mediated through binding to nucleoporins. Upon transit of a nuclear export complex into the cytoplasm, disassembling of the complex and hydrolysis of Ran-GTP to Ran-GDP (induced by RANBP1 and RANGAP1, respectively) cause release of the importin-alpha from the export receptor. CSE1L/XPO2 then return to the nuclear compartment and mediate another round of transport. The directionality of nuclear export is thought to be conferred by an asymmetric distribution of the GTP- and GDP-bound forms of Ran between the cytoplasm and nucleus. The sequence is that of Exportin-2 (CSE1L) from Homo sapiens (Human).